The following is a 653-amino-acid chain: Phospholipid-transporting ATPase VD (653 aa).

Residues 1 to 375 lie on the Cytoplasmic side of the membrane; it reads MACNLCYEAE…GHWCYTRLSN (375 aa). ATP-binding positions include Glu-14, Phe-56, Lys-80, Arg-124, Thr-204, Gly-205, Asp-206, 259–266, Arg-293, and Lys-299; that span reads GLIITGKT. Asp-319 serves as a coordination point for Mg(2+). ATP-binding residues include Asn-322 and Asp-323. Asp-323 lines the Mg(2+) pocket. The helical transmembrane segment at 376-396 threads the bilayer; that stretch reads MILYFFYKNVAYVNLLFWYQF. At 397 to 407 the chain is on the exoplasmic loop side; the sequence is FCGFSGTSMTD. The chain crosses the membrane as a helical span at residues 408-428; the sequence is YWVLIFFNLLFTSAPPVIYGV. The Cytoplasmic portion of the chain corresponds to 429–458; the sequence is LEKDVSAETLMQLPELYKSGQKSEAYLPHT. The helical transmembrane segment at 459–480 threads the bilayer; that stretch reads FWITLLDAFYQSLVCFFVPYFT. Over 481 to 487 the chain is Exoplasmic loop; that stretch reads YQGSDID. A helical transmembrane segment spans residues 488 to 510; the sequence is IFAFGNPLNTAALFIILLHLIIE. Topologically, residues 511 to 516 are cytoplasmic; sequence SKSLTW. Residues 517–537 traverse the membrane as a helical segment; it reads IHMLVITGSILSYFLFAIVFG. Residues 538 to 555 lie on the Exoplasmic loop side of the membrane; the sequence is AMCVTCNPPSNPYWIMQE. A helical transmembrane segment spans residues 556–580; sequence HVLDPVFYLVCILTTCIALLPRFVY. The Cytoplasmic segment spans residues 581-653; sequence RGAGKMNQVT…AFEMARPCKD (73 aa).

The protein belongs to the cation transport ATPase (P-type) (TC 3.A.3) family. Type IV subfamily. Component of a P4-ATPase flippase complex which consists of a catalytic alpha subunit ATP10A and an accessory beta subunit TMEM30A. Mg(2+) serves as cofactor. Post-translationally, autophosphorylated at the conserved aspartate of the P-type ATPase signature sequence.

The protein localises to the cell membrane. It localises to the endoplasmic reticulum membrane. It catalyses the reaction ATP + H2O + phospholipidSide 1 = ADP + phosphate + phospholipidSide 2.. The catalysed reaction is a beta-D-glucosyl-(1&lt;-&gt;1')-N-acylsphing-4-enine(out) + ATP + H2O = a beta-D-glucosyl-(1&lt;-&gt;1')-N-acylsphing-4-enine(in) + ADP + phosphate + H(+). In terms of biological role, catalytic component of a P4-ATPase flippase complex, which catalyzes the hydrolysis of ATP coupled to the transport of glucosylceramide (GlcCer) from the outer to the inner leaflet of the plasma membrane. This is Phospholipid-transporting ATPase VD (ATP10D) from Macaca fascicularis (Crab-eating macaque).